Consider the following 377-residue polypeptide: uncharacterized protein (377 aa).

A run of 4 helical transmembrane segments spans residues 26 to 46 (TFQNYLLILSMIVSIAVVVAI), 67 to 87 (TVGSILATISALLVSISWVII), 108 to 128 (FLTFVVISFTTVFLFILISLT), and 135 to 155 (IDYGIIYYVIMLNFLMYALYI).

It localises to the cell membrane. This is an uncharacterized protein from Methanocaldococcus jannaschii (strain ATCC 43067 / DSM 2661 / JAL-1 / JCM 10045 / NBRC 100440) (Methanococcus jannaschii).